A 393-amino-acid chain; its full sequence is Nucleoside permease NupC (393 aa).

Transmembrane regions (helical) follow at residues 3–23 (YLIG…ASSG), 32–52 (IVVM…TGIG), 87–107 (TTFF…IGIL), 168–188 (LCAS…MTML), 191–211 (EYVV…ASII), 249–269 (VVVA…NGIF), 272–292 (VFGI…AFLV), 334–354 (AIVS…IIAG), and 372–392 (LKLL…VGLI).

The protein belongs to the concentrative nucleoside transporter (CNT) (TC 2.A.41) family.

The protein resides in the cell membrane. In terms of biological role, transport of the pyrimidine nucleoside uridine. The polypeptide is Nucleoside permease NupC (Bacillus subtilis (strain 168)).